We begin with the raw amino-acid sequence, 361 residues long: Phospho-N-acetylmuramoyl-pentapeptide-transferase (361 aa).

10 consecutive transmembrane segments (helical) span residues 25-45, 72-92, 95-115, 135-155, 169-189, 200-220, 240-260, 264-284, 289-309, and 338-358; these read TGGA…WIID, TPTM…VLWA, LNPY…VGFY, LLIE…LGRA, VMLN…VGAG, GLAI…SYLA, LAVL…FNAP, IFMG…IAVA, IVLA…IVQV, and QIVI…LSTL.

The protein belongs to the glycosyltransferase 4 family. MraY subfamily. It depends on Mg(2+) as a cofactor.

The protein resides in the cell inner membrane. It carries out the reaction UDP-N-acetyl-alpha-D-muramoyl-L-alanyl-gamma-D-glutamyl-meso-2,6-diaminopimeloyl-D-alanyl-D-alanine + di-trans,octa-cis-undecaprenyl phosphate = di-trans,octa-cis-undecaprenyl diphospho-N-acetyl-alpha-D-muramoyl-L-alanyl-D-glutamyl-meso-2,6-diaminopimeloyl-D-alanyl-D-alanine + UMP. It participates in cell wall biogenesis; peptidoglycan biosynthesis. In terms of biological role, catalyzes the initial step of the lipid cycle reactions in the biosynthesis of the cell wall peptidoglycan: transfers peptidoglycan precursor phospho-MurNAc-pentapeptide from UDP-MurNAc-pentapeptide onto the lipid carrier undecaprenyl phosphate, yielding undecaprenyl-pyrophosphoryl-MurNAc-pentapeptide, known as lipid I. This Rhodopseudomonas palustris (strain TIE-1) protein is Phospho-N-acetylmuramoyl-pentapeptide-transferase.